The following is a 131-amino-acid chain: Gem-associated protein 7 (131 aa).

Methionine 1 is modified (N-acetylmethionine). Positions 1–29 (MQTPVNIPVPVLRLPRGPDGFSRGFAPDG) constitute an SUZ-C domain. Threonine 3 is subject to Phosphothreonine. One can recognise a Sm domain in the interval 65–131 (RYLRSLLAMV…SDIISYTFKP (67 aa)).

The protein belongs to the gemin-7 family. Part of the core SMN complex that contains SMN1, GEMIN2/SIP1, DDX20/GEMIN3, GEMIN4, GEMIN5, GEMIN6, GEMIN7, GEMIN8 and STRAP/UNRIP. Part of the SMN-Sm complex that contains SMN1, GEMIN2/SIP1, DDX20/GEMIN3, GEMIN4, GEMIN5, GEMIN6, GEMIN7, GEMIN8, STRAP/UNRIP and the Sm proteins SNRPB, SNRPD1, SNRPD2, SNRPD3, SNRPE, SNRPF and SNRPG. Interacts with GEMIN6; the interaction is direct. Interacts with STRAP/UNRIP; the interaction is direct. Interacts with GEMIN8; the interaction is direct. Interacts with SNRPB, SNRPD2, SNRPD3 and SNRPE; the interaction is direct.

The protein localises to the nucleus. It is found in the nucleoplasm. It localises to the gem. The protein resides in the cytoplasm. Its function is as follows. The SMN complex catalyzes the assembly of small nuclear ribonucleoproteins (snRNPs), the building blocks of the spliceosome, and thereby plays an important role in the splicing of cellular pre-mRNAs. Most spliceosomal snRNPs contain a common set of Sm proteins SNRPB, SNRPD1, SNRPD2, SNRPD3, SNRPE, SNRPF and SNRPG that assemble in a heptameric protein ring on the Sm site of the small nuclear RNA to form the core snRNP (Sm core). In the cytosol, the Sm proteins SNRPD1, SNRPD2, SNRPE, SNRPF and SNRPG are trapped in an inactive 6S pICln-Sm complex by the chaperone CLNS1A that controls the assembly of the core snRNP. To assemble core snRNPs, the SMN complex accepts the trapped 5Sm proteins from CLNS1A forming an intermediate. Binding of snRNA inside 5Sm triggers eviction of the SMN complex, thereby allowing binding of SNRPD3 and SNRPB to complete assembly of the core snRNP. The sequence is that of Gem-associated protein 7 (GEMIN7) from Homo sapiens (Human).